We begin with the raw amino-acid sequence, 217 residues long: Putative peroxiredoxin Q, chloroplastic (217 aa).

The N-terminal 66 residues, 1–66, are a transit peptide targeting the chloroplast; the sequence is MAFAVSTACR…PSTTGRNRIV (66 aa). The Thioredoxin domain maps to 70 to 217; it reads VSKGSAAPNF…GETLKILQSL (148 aa). The active-site Cysteine sulfenic acid (-SOH) intermediate is Cys-112. A disulfide bridge connects residues Cys-112 and Cys-117.

The protein belongs to the peroxiredoxin family. BCP/PrxQ subfamily. As to quaternary structure, monomer.

The protein resides in the plastid. The protein localises to the chloroplast thylakoid lumen. The catalysed reaction is a hydroperoxide + [thioredoxin]-dithiol = an alcohol + [thioredoxin]-disulfide + H2O. Functionally, thiol-specific peroxidase that catalyzes the reduction of hydrogen peroxide and organic hydroperoxides to water and alcohols, respectively. Plays a role in cell protection against oxidative stress by detoxifying peroxides. This chain is Putative peroxiredoxin Q, chloroplastic, found in Oryza sativa subsp. indica (Rice).